A 103-amino-acid polypeptide reads, in one-letter code: Large ribosomal subunit protein eL14 (103 aa).

It belongs to the eukaryotic ribosomal protein eL14 family.

This Pyrobaculum calidifontis (strain DSM 21063 / JCM 11548 / VA1) protein is Large ribosomal subunit protein eL14.